Consider the following 449-residue polypeptide: 23S rRNA (uracil(1939)-C(5))-methyltransferase RlmD (449 aa).

Positions 12–70 constitute a TRAM domain; the sequence is SKQLSAKQSFSVHQLDHLGAGIAQHQGKVVFIPGALPNETVQAQLTEQKKNYARAKLIK. Residues Cys83, Cys89, Cys92, and Cys170 each coordinate [4Fe-4S] cluster. Gln282, Phe311, Asn316, Glu332, Asp359, and Asp379 together coordinate S-adenosyl-L-methionine. Residue Cys405 is the Nucleophile of the active site.

This sequence belongs to the class I-like SAM-binding methyltransferase superfamily. RNA M5U methyltransferase family. RlmD subfamily.

The enzyme catalyses uridine(1939) in 23S rRNA + S-adenosyl-L-methionine = 5-methyluridine(1939) in 23S rRNA + S-adenosyl-L-homocysteine + H(+). Its function is as follows. Catalyzes the formation of 5-methyl-uridine at position 1939 (m5U1939) in 23S rRNA. The chain is 23S rRNA (uracil(1939)-C(5))-methyltransferase RlmD from Shewanella sp. (strain ANA-3).